A 212-amino-acid polypeptide reads, in one-letter code: F420-dependent NADP reductase (212 aa).

Residues 9–12 (TGNL), 31–32 (SR), Lys-36, Ile-72, His-76, Val-98, and Ala-137 contribute to the NADP(+) site. Position 207 (Leu-207) interacts with coenzyme F420-(gamma-Glu)n.

Belongs to the F420-dependent NADP reductase family. In terms of assembly, homodimer.

It catalyses the reaction reduced coenzyme F420-(gamma-L-Glu)(n) + NADP(+) = oxidized coenzyme F420-(gamma-L-Glu)(n) + NADPH + 2 H(+). Functionally, catalyzes the reversible reduction of NADP(+) by F420H(2). In this reaction the proS hydrogen at C5 of F420 is transferred into the proS position at C4 of NADPH. The sequence is that of F420-dependent NADP reductase (fno) from Archaeoglobus fulgidus (strain ATCC 49558 / DSM 4304 / JCM 9628 / NBRC 100126 / VC-16).